The chain runs to 154 residues: NADPH-dependent 7-cyano-7-deazaguanine reductase (154 aa).

Residues 1–21 (MPNTDVSSLSMLGQQTETAQS) show a composition bias toward polar residues. Residues 1–28 (MPNTDVSSLSMLGQQTETAQSPEEAVLE) are disordered. The active-site Thioimide intermediate is Cys52. The Proton donor role is filled by Asp59. Substrate is bound by residues 74-76 (VES) and 93-94 (HE).

This sequence belongs to the GTP cyclohydrolase I family. QueF type 1 subfamily.

It is found in the cytoplasm. The enzyme catalyses 7-aminomethyl-7-carbaguanine + 2 NADP(+) = 7-cyano-7-deazaguanine + 2 NADPH + 3 H(+). It functions in the pathway tRNA modification; tRNA-queuosine biosynthesis. Functionally, catalyzes the NADPH-dependent reduction of 7-cyano-7-deazaguanine (preQ0) to 7-aminomethyl-7-deazaguanine (preQ1). This Rhizobium johnstonii (strain DSM 114642 / LMG 32736 / 3841) (Rhizobium leguminosarum bv. viciae) protein is NADPH-dependent 7-cyano-7-deazaguanine reductase.